The following is a 400-amino-acid chain: Probable succinyl-diaminopimelate desuccinylase (400 aa).

Position 72 (histidine 72) interacts with Zn(2+). Residue aspartate 74 is part of the active site. A Zn(2+)-binding site is contributed by aspartate 105. The active-site Proton acceptor is glutamate 139. Glutamate 140, glutamate 165, and histidine 378 together coordinate Zn(2+).

It belongs to the peptidase M20A family. Zn(2+) serves as cofactor. The cofactor is Co(2+).

It carries out the reaction N-succinyl-(2S,6S)-2,6-diaminopimelate + H2O = (2S,6S)-2,6-diaminopimelate + succinate. Its pathway is amino-acid biosynthesis; L-lysine biosynthesis via DAP pathway; LL-2,6-diaminopimelate from (S)-tetrahydrodipicolinate (succinylase route): step 3/3. The polypeptide is Probable succinyl-diaminopimelate desuccinylase (dapE) (Staphylococcus aureus (strain Mu50 / ATCC 700699)).